Reading from the N-terminus, the 392-residue chain is Phospho-N-acetylmuramoyl-pentapeptide-transferase (392 aa).

Helical transmembrane passes span 29 to 49, 76 to 96, 100 to 120, 137 to 157, 193 to 213, 225 to 245, 262 to 282, 289 to 309, 314 to 334, and 369 to 389; these read AVMA…FVIR, TMGG…WFDL, FVWI…ADDW, YLWQ…SISE, ISYP…IVGS, GLAI…AYVT, SGEL…FLWF, VFMG…IAVI, IVLA…MMQV, and QVVV…LSTL.

This sequence belongs to the glycosyltransferase 4 family. MraY subfamily. Requires Mg(2+) as cofactor.

The protein localises to the cell inner membrane. The catalysed reaction is UDP-N-acetyl-alpha-D-muramoyl-L-alanyl-gamma-D-glutamyl-meso-2,6-diaminopimeloyl-D-alanyl-D-alanine + di-trans,octa-cis-undecaprenyl phosphate = di-trans,octa-cis-undecaprenyl diphospho-N-acetyl-alpha-D-muramoyl-L-alanyl-D-glutamyl-meso-2,6-diaminopimeloyl-D-alanyl-D-alanine + UMP. It participates in cell wall biogenesis; peptidoglycan biosynthesis. Functionally, catalyzes the initial step of the lipid cycle reactions in the biosynthesis of the cell wall peptidoglycan: transfers peptidoglycan precursor phospho-MurNAc-pentapeptide from UDP-MurNAc-pentapeptide onto the lipid carrier undecaprenyl phosphate, yielding undecaprenyl-pyrophosphoryl-MurNAc-pentapeptide, known as lipid I. The polypeptide is Phospho-N-acetylmuramoyl-pentapeptide-transferase (Polaromonas sp. (strain JS666 / ATCC BAA-500)).